The primary structure comprises 129 residues: Large ribosomal subunit protein uL22 (129 aa).

The protein belongs to the universal ribosomal protein uL22 family. Part of the 50S ribosomal subunit.

Its function is as follows. This protein binds specifically to 23S rRNA; its binding is stimulated by other ribosomal proteins, e.g. L4, L17, and L20. It is important during the early stages of 50S assembly. It makes multiple contacts with different domains of the 23S rRNA in the assembled 50S subunit and ribosome. In terms of biological role, the globular domain of the protein is located near the polypeptide exit tunnel on the outside of the subunit, while an extended beta-hairpin is found that lines the wall of the exit tunnel in the center of the 70S ribosome. The sequence is that of Large ribosomal subunit protein uL22 from Rhizobium meliloti (strain 1021) (Ensifer meliloti).